Consider the following 113-residue polypeptide: MATPGLGVLLAFGLPMLPSGWSLTAPDPFTNSTTQPPGDESNGGLSSGAIVAITVVFSILGVLLIAVGLFLLMRKLREKRQTEGTYRPSSEEQVGARAPPPPNLKLPPEERLI.

The signal sequence occupies residues 1 to 24 (MATPGLGVLLAFGLPMLPSGWSLT). Positions 23–44 (LTAPDPFTNSTTQPPGDESNGG) are disordered. The Extracellular segment spans residues 25-49 (APDPFTNSTTQPPGDESNGGLSSGA). The N-linked (GlcNAc...) asparagine glycan is linked to N31. The helical transmembrane segment at 50-70 (IVAITVVFSILGVLLIAVGLF) threads the bilayer. At 71 to 113 (LLMRKLREKRQTEGTYRPSSEEQVGARAPPPPNLKLPPEERLI) the chain is on the cytoplasmic side. Residues 77-113 (REKRQTEGTYRPSSEEQVGARAPPPPNLKLPPEERLI) form an interaction with EPB41L5 region. The interval 80–113 (RQTEGTYRPSSEEQVGARAPPPPNLKLPPEERLI) is disordered. Residues 83 to 92 (EGTYRPSSEE) show a composition bias toward polar residues. A PDZ-binding motif is present at residues 110–113 (ERLI).

Component of a complex composed of CRB3, PALS1 and PATJ. Interacts (via C-terminus) with PALS1 (via PDZ domain). Interacts with PARD6A. Interacts (via intracellular domain) with EPB41L5. Interacts with WDR83. As to expression, expressed in the apical renal tubules (at protein level). Expressed in the retinal pigment epithelium.

The protein localises to the apical cell membrane. It is found in the cell junction. It localises to the tight junction. Its function is as follows. Involved in the establishment of cell polarity in mammalian epithelial cells. Regulates the morphogenesis of tight junctions. Involved in promoting phosphorylation and cytoplasmic retention of transcriptional coactivators YAP1 and WWTR1/TAZ which leads to suppression of TGFB1-dependent transcription of target genes such as CCN2/CTGF, SERPINE1/PAI1, SNAI1/SNAIL1 and SMAD7. In Mus musculus (Mouse), this protein is Protein crumbs homolog 3 (Crb3).